The following is a 293-amino-acid chain: Homoserine kinase (293 aa).

80-90 (RPASGLGSSAA) is an ATP binding site.

It belongs to the GHMP kinase family. Homoserine kinase subfamily.

It localises to the cytoplasm. The enzyme catalyses L-homoserine + ATP = O-phospho-L-homoserine + ADP + H(+). The protein operates within amino-acid biosynthesis; L-threonine biosynthesis; L-threonine from L-aspartate: step 4/5. Catalyzes the ATP-dependent phosphorylation of L-homoserine to L-homoserine phosphate. The sequence is that of Homoserine kinase from Halorubrum lacusprofundi (strain ATCC 49239 / DSM 5036 / JCM 8891 / ACAM 34).